Reading from the N-terminus, the 312-residue chain is Ribonuclease Z (312 aa).

Residues His62, His64, Asp66, His67, His144, Asp215, and His273 each contribute to the Zn(2+) site. Asp66 acts as the Proton acceptor in catalysis.

Belongs to the RNase Z family. In terms of assembly, homodimer. The cofactor is Zn(2+).

The enzyme catalyses Endonucleolytic cleavage of RNA, removing extra 3' nucleotides from tRNA precursor, generating 3' termini of tRNAs. A 3'-hydroxy group is left at the tRNA terminus and a 5'-phosphoryl group is left at the trailer molecule.. Zinc phosphodiesterase, which displays some tRNA 3'-processing endonuclease activity. Probably involved in tRNA maturation, by removing a 3'-trailer from precursor tRNA. The protein is Ribonuclease Z of Prochlorococcus marinus (strain MIT 9215).